Reading from the N-terminus, the 178-residue chain is Cytidylate kinase (178 aa).

7 to 15 (GLPGTGTTT) is a binding site for ATP.

Belongs to the cytidylate kinase family. Type 2 subfamily.

The protein localises to the cytoplasm. It catalyses the reaction CMP + ATP = CDP + ADP. The catalysed reaction is dCMP + ATP = dCDP + ADP. This Methanococcus maripaludis (strain DSM 14266 / JCM 13030 / NBRC 101832 / S2 / LL) protein is Cytidylate kinase.